A 156-amino-acid polypeptide reads, in one-letter code: Small ribosomal subunit protein uS7 (156 aa).

The protein belongs to the universal ribosomal protein uS7 family. In terms of assembly, part of the 30S ribosomal subunit. Contacts proteins S9 and S11.

Functionally, one of the primary rRNA binding proteins, it binds directly to 16S rRNA where it nucleates assembly of the head domain of the 30S subunit. Is located at the subunit interface close to the decoding center, probably blocks exit of the E-site tRNA. This Symbiobacterium thermophilum (strain DSM 24528 / JCM 14929 / IAM 14863 / T) protein is Small ribosomal subunit protein uS7.